A 421-amino-acid chain; its full sequence is Tol-Pal system protein TolA (421 aa).

Residues 1-13 (MSKATEQNDKLKR) lie on the Cytoplasmic side of the membrane. A helical membrane pass occupies residues 14-34 (AIIISAVLHVILFAALIWSSF). At 35–421 (DENIEASAGG…FKNAPLDFKP (387 aa)) the chain is on the periplasmic side. The segment at 48–310 (SSIDAVMVDS…LSSGKNAPKT (263 aa)) is domain II (alpha-helical). The interval 65-266 (KRMQSQESSA…KAAADKKAAA (202 aa)) is disordered. Basic and acidic residues-rich tracts occupy residues 73-175 (SAKR…EAEA) and 206-266 (EARK…KAAA). 13 consecutive repeat copies span residues 224-229 (EKKAAA), 230-234 (EKAAA), 235-240 (DKKAAA), 241-245 (EKAAA), 246-250 (DKKAA), 251-255 (EKAAA), 256-260 (EKAAA), 261-266 (DKKAAA), 267-271 (EKAAA), 272-277 (DKKAAA), 278-282 (AKAAA), 283-287 (EKAAA), and 288-292 (AKAAA). Residues 224-292 (EKKAAAEKAA…EKAAAAKAAA (69 aa)) form a 13 X tandem repeats of [EDA]-K(1,2)-A(2,4) region. The disordered stretch occupies residues 300 to 336 (ELSSGKNAPKTGGGAKGNNASPAGSGNTKNNGASGAD). The segment at 311–421 (GGGAKGNNAS…FKNAPLDFKP (111 aa)) is domain III (functional). Polar residues predominate over residues 317 to 332 (NNASPAGSGNTKNNGA). Cysteine 363 and cysteine 388 form a disulfide bridge.

It belongs to the TolA family. The Tol-Pal system is composed of five core proteins: the inner membrane proteins TolA, TolQ and TolR, the periplasmic protein TolB and the outer membrane protein Pal. They form a network linking the inner and outer membranes and the peptidoglycan layer. TolA interacts with TolQ and TolR via its N-terminal domain. Interacts with CpoB, and with the trimeric porins OmpC, OmpF, PhoE and LamB via its central domain. Interacts with TolB via its C-terminal domain. Also interacts with Pal via its C-terminal domain. This interaction is proton motive force dependent and requires TolQ and TolR.

The protein localises to the cell inner membrane. In terms of biological role, part of the Tol-Pal system, which plays a role in outer membrane invagination during cell division and is important for maintaining outer membrane integrity. The Tol-Pal system is also required for polar localization of chemoreceptors clusters. The system also appears to be required for the activity of several outer membrane-localized enzymes with cell wall remodeling activity. Is involved in the uptake of group A colicins (colicins A, E1, E2, E3, and K) and in the uptake of filamentous phage DNA. The chain is Tol-Pal system protein TolA from Escherichia coli (strain K12).